The following is a 175-amino-acid chain: MDRAAKADLVATLNGVFSTTSLVVVAHYKGLTVADMQKLRSQMKQAGATVKVAKNRLANIALDGTDVASIKPLLKGPTLLAYSSDPVAAAKVAVDFAKANDKLVILGGAMGATALNPDGVKALATLPSLDELRAKIVGLVQAPATKIAQVVNAPAAKLARVFGAYADSAKTDEAA.

This sequence belongs to the universal ribosomal protein uL10 family. In terms of assembly, part of the ribosomal stalk of the 50S ribosomal subunit. The N-terminus interacts with L11 and the large rRNA to form the base of the stalk. The C-terminus forms an elongated spine to which L12 dimers bind in a sequential fashion forming a multimeric L10(L12)X complex.

Its function is as follows. Forms part of the ribosomal stalk, playing a central role in the interaction of the ribosome with GTP-bound translation factors. The polypeptide is Large ribosomal subunit protein uL10 (Methylobacterium nodulans (strain LMG 21967 / CNCM I-2342 / ORS 2060)).